Here is a 417-residue protein sequence, read N- to C-terminus: NADH-quinone oxidoreductase subunit D (417 aa).

This sequence belongs to the complex I 49 kDa subunit family. As to quaternary structure, NDH-1 is composed of 14 different subunits. Subunits NuoB, C, D, E, F, and G constitute the peripheral sector of the complex.

The protein resides in the cell inner membrane. The catalysed reaction is a quinone + NADH + 5 H(+)(in) = a quinol + NAD(+) + 4 H(+)(out). Functionally, NDH-1 shuttles electrons from NADH, via FMN and iron-sulfur (Fe-S) centers, to quinones in the respiratory chain. The immediate electron acceptor for the enzyme in this species is believed to be ubiquinone. Couples the redox reaction to proton translocation (for every two electrons transferred, four hydrogen ions are translocated across the cytoplasmic membrane), and thus conserves the redox energy in a proton gradient. The chain is NADH-quinone oxidoreductase subunit D from Herminiimonas arsenicoxydans.